A 691-amino-acid chain; its full sequence is Mediator of RNA polymerase II transcription subunit 17 (691 aa).

Positions 158 to 185 (KLESFDAAANKLLQSAQRLEEDIAAETK) form a coiled coil.

It belongs to the Mediator complex subunit 17 family. Component of the Mediator complex.

Its subcellular location is the nucleus. In terms of biological role, component of the Mediator complex, a coactivator involved in the regulated transcription of nearly all RNA polymerase II-dependent genes. Mediator functions as a bridge to convey information from gene-specific regulatory proteins to the basal RNA polymerase II transcription machinery. Mediator is recruited to promoters by direct interactions with regulatory proteins and serves as a scaffold for the assembly of a functional preinitiation complex with RNA polymerase II and the general transcription factors. The polypeptide is Mediator of RNA polymerase II transcription subunit 17 (SRB4) (Coccidioides immitis (strain RS) (Valley fever fungus)).